The chain runs to 919 residues: Isoleucine--tRNA ligase (919 aa).

The short motif at 57 to 67 is the 'HIGH' region element; it reads PYANGNIHIGH. Position 569 (E569) interacts with L-isoleucyl-5'-AMP. The short motif at 610-614 is the 'KMSKS' region element; the sequence is KMSKS. An ATP-binding site is contributed by K613. Zn(2+)-binding residues include C896, C899, C911, and C914.

It belongs to the class-I aminoacyl-tRNA synthetase family. IleS type 1 subfamily. Monomer. The cofactor is Zn(2+).

The protein resides in the cytoplasm. The enzyme catalyses tRNA(Ile) + L-isoleucine + ATP = L-isoleucyl-tRNA(Ile) + AMP + diphosphate. Its function is as follows. Catalyzes the attachment of isoleucine to tRNA(Ile). As IleRS can inadvertently accommodate and process structurally similar amino acids such as valine, to avoid such errors it has two additional distinct tRNA(Ile)-dependent editing activities. One activity is designated as 'pretransfer' editing and involves the hydrolysis of activated Val-AMP. The other activity is designated 'posttransfer' editing and involves deacylation of mischarged Val-tRNA(Ile). This is Isoleucine--tRNA ligase from Aliarcobacter butzleri (strain RM4018) (Arcobacter butzleri).